Reading from the N-terminus, the 767-residue chain is Pre-mRNA-splicing factor ATP-dependent RNA helicase PRP43 (767 aa).

The tract at residues 1-74 (MGSKRRFSSE…KLEDGKINPF (74 aa)) is disordered. S8 and S9 each carry phosphoserine. The span at 58–70 (TSAEEAQKLEDGK) shows a compositional bias: basic and acidic residues. Residues 103-268 (LKLYQNNQIM…FNDAPLLAVP (166 aa)) enclose the Helicase ATP-binding domain. An ATP-binding site is contributed by 116–123 (GETGSGKT). The DEAH box motif lies at 215–218 (DEAH). The Helicase C-terminal domain maps to 293-473 (TVLQIHATEE…STVLELKKLG (181 aa)).

This sequence belongs to the DEAD box helicase family. DEAH subfamily. DDX15/PRP43 sub-subfamily. In terms of assembly, component of the NTR complex (NTC-related complex), composed of NTR1, NTR2 and PRP43. Interacts with NTR1 and NTR2. Interacts with SPP382.

It localises to the nucleus. The enzyme catalyses ATP + H2O = ADP + phosphate + H(+). Its function is as follows. Pre-mRNA processing factor involved in disassembly of spliceosomes after the release of mature mRNA. This chain is Pre-mRNA-splicing factor ATP-dependent RNA helicase PRP43 (PRP43), found in Saccharomyces cerevisiae (strain ATCC 204508 / S288c) (Baker's yeast).